The chain runs to 231 residues: Ribonuclease HII (231 aa).

Positions 32-223 (WPVAGMDEAG…FRLGGTEVVE (192 aa)) constitute an RNase H type-2 domain. Positions 38, 39, and 130 each coordinate a divalent metal cation.

The protein belongs to the RNase HII family. Mn(2+) serves as cofactor. The cofactor is Mg(2+).

It localises to the cytoplasm. The enzyme catalyses Endonucleolytic cleavage to 5'-phosphomonoester.. Its function is as follows. Endonuclease that specifically degrades the RNA of RNA-DNA hybrids. This is Ribonuclease HII from Mesorhizobium japonicum (strain LMG 29417 / CECT 9101 / MAFF 303099) (Mesorhizobium loti (strain MAFF 303099)).